The following is a 280-amino-acid chain: Bifunctional protein FolD (280 aa).

NADP(+)-binding positions include 166-168 and Ser191; that span reads GRS.

This sequence belongs to the tetrahydrofolate dehydrogenase/cyclohydrolase family. In terms of assembly, homodimer.

It catalyses the reaction (6R)-5,10-methylene-5,6,7,8-tetrahydrofolate + NADP(+) = (6R)-5,10-methenyltetrahydrofolate + NADPH. The catalysed reaction is (6R)-5,10-methenyltetrahydrofolate + H2O = (6R)-10-formyltetrahydrofolate + H(+). It participates in one-carbon metabolism; tetrahydrofolate interconversion. Catalyzes the oxidation of 5,10-methylenetetrahydrofolate to 5,10-methenyltetrahydrofolate and then the hydrolysis of 5,10-methenyltetrahydrofolate to 10-formyltetrahydrofolate. This Saccharophagus degradans (strain 2-40 / ATCC 43961 / DSM 17024) protein is Bifunctional protein FolD.